We begin with the raw amino-acid sequence, 434 residues long: Tryptophan synthase beta chain (434 aa).

Lys-92 carries the N6-(pyridoxal phosphate)lysine modification. A disordered region spans residues 411-434 (VKGGVATSPESFDASGAKGAGSQS).

This sequence belongs to the TrpB family. As to quaternary structure, tetramer of two alpha and two beta chains. Pyridoxal 5'-phosphate is required as a cofactor.

It catalyses the reaction (1S,2R)-1-C-(indol-3-yl)glycerol 3-phosphate + L-serine = D-glyceraldehyde 3-phosphate + L-tryptophan + H2O. The protein operates within amino-acid biosynthesis; L-tryptophan biosynthesis; L-tryptophan from chorismate: step 5/5. The beta subunit is responsible for the synthesis of L-tryptophan from indole and L-serine. This Polaromonas naphthalenivorans (strain CJ2) protein is Tryptophan synthase beta chain.